The sequence spans 247 residues: Protein SODIUM POTASSIUM ROOT DEFECTIVE 3 (247 aa).

The interval 130-166 (GSTGQDTVATEESEASAPKRGSSGPVEEKKKSSGSGS) is disordered. Residues 167–235 (DQVVVLRVSL…KVKNAQFWTP (69 aa)) enclose the HMA domain. A metal cation-binding residues include C180 and C183.

Its subcellular location is the cytoplasm. Its function is as follows. Heavy metal-associated protein involved in salt tolerance. The protein is Protein SODIUM POTASSIUM ROOT DEFECTIVE 3 of Arabidopsis thaliana (Mouse-ear cress).